Consider the following 85-residue polypeptide: UPF0291 protein str0508 (85 aa).

Residues 62–85 form a disordered region; it reads TPEKLRQVQREKGLHGRSLDDPES.

This sequence belongs to the UPF0291 family.

The protein localises to the cytoplasm. The chain is UPF0291 protein str0508 from Streptococcus thermophilus (strain CNRZ 1066).